The chain runs to 892 residues: Zinc finger protein 473 homolog (892 aa).

The KRAB domain occupies 23 to 101 (ETLKDLAMDF…TKSSPLQSGF (79 aa)). Polar residues-rich tracts occupy residues 66–76 (DTSQPSLTSQP) and 84–97 (ATST…SSPL). Disordered regions lie at residues 66–97 (DTSQ…SSPL) and 134–203 (GDPE…DSVQ). Composition is skewed to basic and acidic residues over residues 138 to 156 (SLPR…HQSP) and 190 to 203 (KESR…DSVQ). 2 C2H2-type zinc fingers span residues 209–231 (YKCS…WVLH) and 265–287 (YTCQ…QKIH). The segment covering 297-308 (SDSNLEGLSRSP) has biased composition (polar residues). Positions 297–370 (SDSNLEGLSR…HPKPLRHQKT (74 aa)) are disordered. Composition is skewed to basic and acidic residues over residues 313-323 (GKQRLSKDTDS) and 332-353 (QDQE…ESQP). 8 consecutive C2H2-type zinc fingers follow at residues 377-399 (FRCK…QRAH), 404-426 (YKCA…RKSH), 432-454 (CECQ…QAIH), 460-482 (YKCD…QRIH), 488-510 (HKCS…QRVH), 516-538 (HQCP…RLRH), 544-566 (FGCA…NKIH), and 572-594 (YECK…LSIH). Lysine 476 is covalently cross-linked (Glycyl lysine isopeptide (Lys-Gly) (interchain with G-Cter in SUMO2)). Lysine 602 participates in a covalent cross-link: Glycyl lysine isopeptide (Lys-Gly) (interchain with G-Cter in SUMO2). The C2H2-type 11; degenerate zinc-finger motif lies at 697–719 (FKCDIYNRAFKQRAHLSKHQLIH). 6 consecutive C2H2-type zinc fingers follow at residues 725–747 (FKCN…QKTH), 753–775 (FECS…QKIH), 781–803 (FKCG…QRIH), 809–831 (YVCQ…LRIH), 837–859 (YTCG…ERIH), and 865–887 (YACG…QRIH).

This sequence belongs to the krueppel C2H2-type zinc-finger protein family. As to quaternary structure, interacts with the SLBP/pre-mRNA complex but not with SLBP alone. Interacts with LSM11 in a U7 snRNP-dependent manner.

The protein localises to the nucleus. Functionally, involved in histone 3'-end pre-mRNA processing by associating with U7 snRNP and interacting with SLBP/pre-mRNA complex. Increases histone 3'-end pre-mRNA processing but has no effect on U7 snRNP levels, when overexpressed. Required for cell cycle progression from G1 to S phases. This is Zinc finger protein 473 homolog (Znf473) from Mus musculus (Mouse).